A 129-amino-acid chain; its full sequence is Small ribosomal subunit protein uS11 (129 aa).

Belongs to the universal ribosomal protein uS11 family. Part of the 30S ribosomal subunit. Interacts with proteins S7 and S18. Binds to IF-3.

In terms of biological role, located on the platform of the 30S subunit, it bridges several disparate RNA helices of the 16S rRNA. Forms part of the Shine-Dalgarno cleft in the 70S ribosome. The polypeptide is Small ribosomal subunit protein uS11 (Erwinia tasmaniensis (strain DSM 17950 / CFBP 7177 / CIP 109463 / NCPPB 4357 / Et1/99)).